The following is a 339-amino-acid chain: MEITLFDPIDAHLHVRENALLKAVLRYSSEPFSAAVIMPNLSKPLIDTPTTLEYEEEILKNSSNFKPLMSLYFNDDLTLEELQRAHEKGVRFLKLYPKGMTTNAQNGTSDLLDEKTLEILENAQKLGFILCIHAEQAGFCLDKEFLCHSVLETFALSFPKLKIIIEHLSDWRSIALIEKHDNLYATLTLHHISMTLDDLLGGSLNPHCFCKPLIKTKKDQERLLSLALKAHPKISFGSDSAPHFVSKKHSANIPAGIFSAPILLPALCELFEKHNALENLQAFISNNAKTIYGLDNLPSKKARLSKKPFIVPTHALCLNEKIAILRGGETLSWNLQEIA.

Residues His-12 and His-14 each contribute to the Zn(2+) site. Substrate is bound by residues 14–16 (HVR) and Asn-40. Zn(2+)-binding residues include Lys-94, His-133, His-167, and Asp-239. Lys-94 is subject to N6-carboxylysine. His-133 is a substrate binding site. The active site involves Asp-239. Substrate contacts are provided by His-243 and Ala-255.

The protein belongs to the metallo-dependent hydrolases superfamily. DHOase family. Class II DHOase subfamily. As to quaternary structure, homodimer. Zn(2+) is required as a cofactor.

It carries out the reaction (S)-dihydroorotate + H2O = N-carbamoyl-L-aspartate + H(+). It functions in the pathway pyrimidine metabolism; UMP biosynthesis via de novo pathway; (S)-dihydroorotate from bicarbonate: step 3/3. Catalyzes the reversible cyclization of carbamoyl aspartate to dihydroorotate. The polypeptide is Dihydroorotase (Helicobacter pylori (strain HPAG1)).